Here is a 103-residue protein sequence, read N- to C-terminus: Urease subunit beta (103 aa).

Belongs to the urease beta subunit family. In terms of assembly, heterotrimer of UreA (gamma), UreB (beta) and UreC (alpha) subunits. Three heterotrimers associate to form the active enzyme.

The protein localises to the cytoplasm. It catalyses the reaction urea + 2 H2O + H(+) = hydrogencarbonate + 2 NH4(+). The protein operates within nitrogen metabolism; urea degradation; CO(2) and NH(3) from urea (urease route): step 1/1. The sequence is that of Urease subunit beta from Blochmanniella floridana.